We begin with the raw amino-acid sequence, 185 residues long: MSKLLEESLKTCPIVKRGEYHYFIHPISDGVPLVEPELLRDVSTRVIKMIDTDVDKIVTAEAMGIPIVTAVSIATDIPYVIMRKREYLLEGEIPVHQETGYSKGELYLNGINKGDKVIILDDVISTGGTLVAIINALKRAGADIKDVLCIIDRGNGQNIVEEKTGYKVKTIVKIEVVDGKVNILE.

Belongs to the purine/pyrimidine phosphoribosyltransferase family. Archaeal HPRT subfamily. Homodimer.

Its subcellular location is the cytoplasm. The enzyme catalyses IMP + diphosphate = hypoxanthine + 5-phospho-alpha-D-ribose 1-diphosphate. It carries out the reaction GMP + diphosphate = guanine + 5-phospho-alpha-D-ribose 1-diphosphate. Its pathway is purine metabolism; IMP biosynthesis via salvage pathway; IMP from hypoxanthine: step 1/1. Its function is as follows. Catalyzes a salvage reaction resulting in the formation of IMP that is energically less costly than de novo synthesis. The polypeptide is Hypoxanthine/guanine phosphoribosyltransferase (hpt) (Methanococcus maripaludis (strain DSM 14266 / JCM 13030 / NBRC 101832 / S2 / LL)).